The following is a 121-amino-acid chain: UPF0344 protein BCG9842_B4136 (121 aa).

4 helical membrane-spanning segments follow: residues 6 to 26 (ITAW…YSAG), 38 to 58 (LMYI…VKTA), 65 to 85 (WYGL…MVLV), and 92 to 112 (PTGA…YLGL).

Belongs to the UPF0344 family.

The protein resides in the cell membrane. This is UPF0344 protein BCG9842_B4136 from Bacillus cereus (strain G9842).